Consider the following 208-residue polypeptide: Small ribosomal subunit protein uS4 (208 aa).

Residues 98-158 (RRLDNVVYRL…EKSRKIACIN (61 aa)) enclose the S4 RNA-binding domain.

It belongs to the universal ribosomal protein uS4 family. In terms of assembly, part of the 30S ribosomal subunit. Contacts protein S5. The interaction surface between S4 and S5 is involved in control of translational fidelity.

Its function is as follows. One of the primary rRNA binding proteins, it binds directly to 16S rRNA where it nucleates assembly of the body of the 30S subunit. With S5 and S12 plays an important role in translational accuracy. The chain is Small ribosomal subunit protein uS4 from Geobacter sulfurreducens (strain ATCC 51573 / DSM 12127 / PCA).